Here is a 389-residue protein sequence, read N- to C-terminus: Choline/ethanolaminephosphotransferase 2 (389 aa).

A run of 8 helical transmembrane segments spans residues Met-49–Ser-69, Thr-141–Phe-161, Gly-176–Ala-196, Ile-220–Asn-240, Met-252–Trp-272, His-286–Ala-306, Met-321–Leu-338, and Val-350–Ile-370.

Belongs to the CDP-alcohol phosphatidyltransferase class-I family. Mg(2+) is required as a cofactor. The cofactor is Mn(2+).

It localises to the membrane. The catalysed reaction is CDP-ethanolamine + a 1,2-diacyl-sn-glycerol = a 1,2-diacyl-sn-glycero-3-phosphoethanolamine + CMP + H(+). It catalyses the reaction CDP-choline + a 1,2-diacyl-sn-glycerol = a 1,2-diacyl-sn-glycero-3-phosphocholine + CMP + H(+). Its pathway is phospholipid metabolism; phosphatidylethanolamine biosynthesis; phosphatidylethanolamine from ethanolamine: step 3/3. It participates in phospholipid metabolism; phosphatidylcholine biosynthesis; phosphatidylcholine from phosphocholine: step 2/2. Its function is as follows. Catalyzes both phosphatidylcholine and phosphatidylethanolamine biosynthesis from CDP-choline and CDP-ethanolamine, respectively. Has a higher cholinephosphotransferase activity than ethanolaminephosphotransferase activity. The polypeptide is Choline/ethanolaminephosphotransferase 2 (AAPT2) (Arabidopsis thaliana (Mouse-ear cress)).